We begin with the raw amino-acid sequence, 297 residues long: T-cell leukemia homeobox protein 1 (297 aa).

The interval D153–S174 is disordered. Positions K168–T227 form a DNA-binding region, homeobox.

It localises to the nucleus. Seems to be involved in the development of cranial sensory innervation from peripheral ganglia. In Gallus gallus (Chicken), this protein is T-cell leukemia homeobox protein 1 (TLX1).